Here is a 260-residue protein sequence, read N- to C-terminus: Sperm microtubule inner protein 6 (260 aa).

Belongs to the SPMIP6 family. Microtubule inner protein component of sperm flagellar doublet microtubules. Interacts with alpha-tubulin. Testis-specific, expressed exclusively in germ cells (at protein level). In terms of tissue distribution, testis-specific. As to expression, expressed in both lung and testis.

The protein resides in the cytoplasm. It localises to the cytoskeleton. Its subcellular location is the nucleus. It is found in the mitochondrion. The protein localises to the flagellum axoneme. Its function is as follows. May participate in intramanchette transport and midpiece formation of the sperm tail. May play a potential role in somatic cell proliferation. The chain is Sperm microtubule inner protein 6 (SPMIP6) from Mus musculus (Mouse).